The primary structure comprises 78 residues: Large ribosomal subunit protein bL28 (78 aa).

The tract at residues 1-21 is disordered; sequence MSRVCQVTGKRPMSGNNRSHA.

It belongs to the bacterial ribosomal protein bL28 family.

This chain is Large ribosomal subunit protein bL28, found in Photorhabdus laumondii subsp. laumondii (strain DSM 15139 / CIP 105565 / TT01) (Photorhabdus luminescens subsp. laumondii).